The following is a 177-amino-acid chain: Parathyroid hormone-related protein (177 aa).

Positions 1 to 24 (MLRRLVQQWGVAVFLLSYSVPSCG) are cleaved as a signal peptide. A propeptide spanning residues 25-34 (RSVEELGRRL) is cleaved from the precursor. Positions 57–68 (RFFLHHLIAEIH) are important for receptor binding. The interval 74–177 (ATSEVSPNSK…TSLELNLRRH (104 aa)) is disordered. A compositionally biased stretch (polar residues) spans 76–90 (SEVSPNSKPAPNTKN). A Nuclear localization signal motif is present at residues 108-129 (TNKVETYKEQPLKTPGKKKKGK). Basic and acidic residues predominate over residues 109–118 (NKVETYKEQP). The span at 122-132 (PGKKKKGKPGK) shows a compositional bias: basic residues.

It belongs to the parathyroid hormone family. PTHrP interacts with PTH1R (via N-terminal extracellular domain). In terms of processing, there are several secretory forms, including osteostatin, arising from endoproteolytic cleavage of the initial translation product. Each of these secretory forms is believed to have one or more of its own receptors that mediates the normal paracrine, autocrine and endocrine actions.

The protein localises to the secreted. The protein resides in the cytoplasm. It localises to the nucleus. Neuroendocrine peptide which is a critical regulator of cellular and organ growth, development, migration, differentiation and survival and of epithelial calcium ion transport. Acts by binding to its receptor, PTH1R, activating G protein-coupled receptor signaling. Regulates endochondral bone development and epithelial-mesenchymal interactions during the formation of the mammary glands and teeth. Required for skeletal homeostasis. Promotes mammary mesenchyme differentiation and bud outgrowth by modulating mesenchymal cell responsiveness to BMPs. Up-regulates BMPR1A expression in the mammary mesenchyme and this increases the sensitivity of these cells to BMPs and allows them to respond to BMP4 in a paracrine and/or autocrine fashion. BMP4 signaling in the mesenchyme, in turn, triggers epithelial outgrowth and augments MSX2 expression, which causes the mammary mesenchyme to inhibit hair follicle formation within the nipple sheath. Its function is as follows. Potent inhibitor of osteoclastic bone resorption. This Canis lupus familiaris (Dog) protein is Parathyroid hormone-related protein (PTHLH).